The chain runs to 107 residues: Large ribosomal subunit protein uL24 (107 aa).

The protein belongs to the universal ribosomal protein uL24 family. Part of the 50S ribosomal subunit.

Functionally, one of two assembly initiator proteins, it binds directly to the 5'-end of the 23S rRNA, where it nucleates assembly of the 50S subunit. In terms of biological role, one of the proteins that surrounds the polypeptide exit tunnel on the outside of the subunit. This chain is Large ribosomal subunit protein uL24, found in Solidesulfovibrio magneticus (strain ATCC 700980 / DSM 13731 / RS-1) (Desulfovibrio magneticus).